We begin with the raw amino-acid sequence, 387 residues long: 3-hydroxy-D-aspartate aldolase (387 aa).

An N6-(pyridoxal phosphate)lysine modification is found at lysine 62. Glutamine 85 serves as a coordination point for pyridoxal 5'-phosphate. A disordered region spans residues 199 to 228; it reads HGQLRGPQGQAGRRHCPGERGRGRAGGRGL. Pyridoxal 5'-phosphate is bound by residues threonine 238, 256–257, and tyrosine 265; that span reads GS. Residues histidine 355 and aspartate 357 each contribute to the Mg(2+) site.

The protein belongs to the DSD1 family. In terms of assembly, homodimer. Requires pyridoxal 5'-phosphate as cofactor. It depends on Mn(2+) as a cofactor. Mg(2+) serves as cofactor. Co(2+) is required as a cofactor.

It carries out the reaction (3S)-3-hydroxy-D-aspartate = glyoxylate + glycine. The catalysed reaction is (3R)-3-hydroxy-D-aspartate = glyoxylate + glycine. Its function is as follows. Catalyzes the condensation of glyoxylate and glycine into (2R,3S)-beta-hydroxyaspartate ((3S)-3-hydroxy-D-aspartate). Functions in glyoxylate assimilation via the beta-hydroxyaspartate cycle (BHAC). In vitro catalyzes the cleavage of both D-erythro- and D-threo-3-hydroxyaspartate to glycine and glyoxylate. Also acts on D-threonine, D-3-phenylserine and D-3-3,4-methylenedioxyphenylserine. In Paracoccus denitrificans, this protein is 3-hydroxy-D-aspartate aldolase (dhaa).